The chain runs to 305 residues: Protoheme IX farnesyltransferase (305 aa).

The next 9 membrane-spanning stretches (helical) occupy residues 31–51, 52–72, 102–119, 123–145, 151–171, 179–199, 218–238, 240–260, and 281–301; these read VMSL…YSVH, PFIA…AGAI, ALSF…FMAL, LLAS…IWLK, NIVI…AAVS, IILF…LALF, ILYT…VSLM, FFIG…GLVF, and FAYS…TSTI.

This sequence belongs to the UbiA prenyltransferase family. Protoheme IX farnesyltransferase subfamily.

The protein localises to the cell inner membrane. The enzyme catalyses heme b + (2E,6E)-farnesyl diphosphate + H2O = Fe(II)-heme o + diphosphate. It functions in the pathway porphyrin-containing compound metabolism; heme O biosynthesis; heme O from protoheme: step 1/1. Functionally, converts heme B (protoheme IX) to heme O by substitution of the vinyl group on carbon 2 of heme B porphyrin ring with a hydroxyethyl farnesyl side group. The polypeptide is Protoheme IX farnesyltransferase (Rickettsia akari (strain Hartford)).